Reading from the N-terminus, the 261-residue chain is Aquaporin-8 (261 aa).

The Cytoplasmic portion of the chain corresponds to 1–36; the sequence is MSGEQTPMCSMDLPEVKVKTSMAGRCRVFWYEQYVQ. The helical transmembrane segment at 37-57 threads the bilayer; that stretch reads PCIVELVGSALFIFIGCLSVI. Cys53 bears the Cysteine persulfide mark. Position 53 is a cysteine sulfenic acid (-SOH) (Cys53). The Extracellular portion of the chain corresponds to 58-84; the sequence is ENSPNTGLLQPALAHGLALGLIIATLG. A helical membrane pass occupies residues 85–105; that stretch reads NISGGHFNPAVSLAVTVIGGL. An NPA 1 motif is present at residues 92 to 94; that stretch reads NPA. Residues 106–107 are Cytoplasmic-facing; it reads KT. A helical membrane pass occupies residues 108–128; it reads MLLIPYWISQLFGGLIGAALA. At 129-156 the chain is on the extracellular side; the sequence is KVVSPEERFWNASGAAFAIVQEQEQVAE. The N-linked (GlcNAc...) asparagine glycan is linked to Asn139. The helical transmembrane segment at 157-177 threads the bilayer; it reads ALGIEIILTMLLVLAVCMGAV. The Cytoplasmic portion of the chain corresponds to 178-183; sequence NEKTMG. A helical membrane pass occupies residues 184-204; it reads PLAPFSIGFSVIVDILAGGSI. Residues 205-228 are Extracellular-facing; that stretch reads SGACMNPARAFGPAVMAGYWDFHW. The NPA 2 signature appears at 210 to 212; that stretch reads NPA. The chain crosses the membrane as a helical span at residues 229 to 249; the sequence is IYWLGPLLAGLFVGLLIRLLI. Residues 250 to 261 are Cytoplasmic-facing; sequence GDEKTRLILKSR.

The protein belongs to the MIP/aquaporin (TC 1.A.8) family. Post-translationally, sulfenylation at Cys-53(C53-SOH) when hydrogen peroxide flows through the AQP8 channel, making it susceptible to hydrogen sulfide produced by CBS. In terms of processing, persulfidation at Cys-53 is required to gate AQP8 channel; under stress condition, hydrogen peroxide accumulates in the cell leading to CBS activation that produces hydrogen sulfide inducing persulfidation of oxidized Cys-53 (C53-SOH). N-glycosylated. Expressed in placenta. Highly expressed in the epithelial layer of gall-bladders. Expressed in heart, kidney, submandibular gland, liver, small intestine, colon, testes, and epididymis. In testes, expressed in spermatogenic cells.

It is found in the cell membrane. Its subcellular location is the mitochondrion inner membrane. The protein localises to the apical cell membrane. The protein resides in the basolateral cell membrane. It localises to the smooth endoplasmic reticulum membrane. It carries out the reaction H2O(in) = H2O(out). It catalyses the reaction urea(in) = urea(out). The catalysed reaction is NH4(+)(in) = NH4(+)(out). The enzyme catalyses H2O2(out) = H2O2(in). It carries out the reaction formamide(out) = formamide(in). It catalyses the reaction methylamine(out) = methylamine(in). With respect to regulation, reversibly gated by a two-step sulfenylation-persulfidation process in cells undergoing diverse stresses. Functionally, channel that allows the facilitated permeation of water and uncharged molecules, such as hydrogen peroxide and the neutral form of ammonia (NH3), through cellular membranes such as plasma membrane, inner mitochondrial membrane and endoplasmic reticulum membrane of several tissues. The transport of ammonia neutral form induces a parallel transport of proton, at alkaline pH when the concentration of ammonia is high. However, it is unclear whether the transport of proton takes place via the aquaporin or via an endogenous pathway. Also, may transport ammonia analogs such as formamide and methylamine, a transport favourited at basic pH due to the increase of unprotonated (neutral) form, which is expected to favor diffusion. In vitro, may be also permeable to urea but not to glycerol. Does not transport urea or glycerol. The water transport mechanism is mercury- and copper-sensitive and passive in response to osmotic driving forces. At the canicular plasma membrane, mediates the osmotic transport of water toward the bile canaliculus and facilitates the cAMP-induced bile canalicular water secretion, a process involved in bile formation. In addition, mediates the hydrogen peroxide release from hepatocyte mitochondria that modulates the SREBF2-mediated cholesterol synthesis and facilitates the mitochondrial ammonia uptake which is metabolized into urea, mainly under glucagon stimulation. In B cells, transports the CYBB-generated hydrogen peroxide from the external leaflet of the plasma membrane to the cytosol to promote B cell activation and differentiation for signal amplification. In the small intestine and colon system, mediates water transport through mitochondria and apical membrane of epithelial cells. May play an important role in the adaptive response of proximal tubule cells to acidosis possibly facilitating mitochondrial ammonia transport. In Mus musculus (Mouse), this protein is Aquaporin-8.